We begin with the raw amino-acid sequence, 417 residues long: GPI mannosyltransferase 2 (417 aa).

A run of 9 helical transmembrane segments spans residues 10–30 (FLIINVTFFAVKLLQFGLVWL), 104–124 (IVLKAVSFNLLLHYLSTWIVY), 142–162 (LALTTSVLFILSSAAGFLISV), 167–187 (IAFTFSLLGMLFRQWSISFDV), 206–226 (FCFAFAFLNRSNCLLLGLFYV), 239–259 (ITSIFYPILSGTILFGVFVYF), 312–332 (IPNFLFGLPNIVITWNAITYF), 344–364 (YIWIARIFLFIMVFLANVQII), and 394–414 (YYVMWLLIWIPTQTALFACFL).

The protein belongs to the PIGV family.

The protein resides in the endoplasmic reticulum membrane. It functions in the pathway glycolipid biosynthesis; glycosylphosphatidylinositol-anchor biosynthesis. Functionally, mannosyltransferase involved in glycosylphosphatidylinositol-anchor biosynthesis. Transfers the second mannose to the glycosylphosphatidylinositol during GPI precursor assembly. The protein is GPI mannosyltransferase 2 (GPI18) of Kluyveromyces lactis (strain ATCC 8585 / CBS 2359 / DSM 70799 / NBRC 1267 / NRRL Y-1140 / WM37) (Yeast).